Reading from the N-terminus, the 207-residue chain is Guanylate kinase (207 aa).

Positions 6 to 185 constitute a Guanylate kinase-like domain; it reads GLLIVLSGPS…AKNRIQSIVE (180 aa). 13–20 lines the ATP pocket; it reads GPSGVGKG.

This sequence belongs to the guanylate kinase family.

It localises to the cytoplasm. It carries out the reaction GMP + ATP = GDP + ADP. Functionally, essential for recycling GMP and indirectly, cGMP. The protein is Guanylate kinase of Staphylococcus epidermidis (strain ATCC 12228 / FDA PCI 1200).